The chain runs to 102 residues: Small ribosomal subunit protein uS10 (102 aa).

The protein belongs to the universal ribosomal protein uS10 family. As to quaternary structure, part of the 30S ribosomal subunit.

Its function is as follows. Involved in the binding of tRNA to the ribosomes. In Bacillus subtilis (strain 168), this protein is Small ribosomal subunit protein uS10 (rpsJ).